Reading from the N-terminus, the 422-residue chain is Multifunctional CCA protein (422 aa).

ATP-binding residues include Gly8 and Arg11. 2 residues coordinate CTP: Gly8 and Arg11. Residues Asp21 and Asp23 each contribute to the Mg(2+) site. Positions 91, 137, and 140 each coordinate ATP. Positions 91, 137, and 140 each coordinate CTP. The region spanning 228-329 (TGLHSLMALE…VKLLQSCDAW (102 aa)) is the HD domain. Positions 403 to 422 (FKQDNAPEAQEKGGEDVGLT) are disordered.

The protein belongs to the tRNA nucleotidyltransferase/poly(A) polymerase family. Bacterial CCA-adding enzyme type 1 subfamily. In terms of assembly, monomer. Can also form homodimers and oligomers. Mg(2+) serves as cofactor. Ni(2+) is required as a cofactor.

It catalyses the reaction a tRNA precursor + 2 CTP + ATP = a tRNA with a 3' CCA end + 3 diphosphate. The enzyme catalyses a tRNA with a 3' CCA end + 2 CTP + ATP = a tRNA with a 3' CCACCA end + 3 diphosphate. Catalyzes the addition and repair of the essential 3'-terminal CCA sequence in tRNAs without using a nucleic acid template. Adds these three nucleotides in the order of C, C, and A to the tRNA nucleotide-73, using CTP and ATP as substrates and producing inorganic pyrophosphate. tRNA 3'-terminal CCA addition is required both for tRNA processing and repair. Also involved in tRNA surveillance by mediating tandem CCA addition to generate a CCACCA at the 3' terminus of unstable tRNAs. While stable tRNAs receive only 3'-terminal CCA, unstable tRNAs are marked with CCACCA and rapidly degraded. In Hahella chejuensis (strain KCTC 2396), this protein is Multifunctional CCA protein.